A 188-amino-acid polypeptide reads, in one-letter code: MTEYKLVVVGAGGVGKSALTIQLIQNHFVDEYDPTIEDSYRKQVVIDGETCLLDILDTAGQEEYSAMRDQYMRTGEGFLCVFAINNTKSFEDIHHYREQIKRVKDSEDVPMVLVGNKCDLPSRTVDTKQAQDLARSYGIPFIETSAKTRQGVDDAFYTLVREIRKHKEKMSKDGKKKKKKTKTKCIIM.

GTP is bound by residues 10-18, 29-35, 59-60, and 116-119; these read GAGGVGKSA, VDEYDPT, AG, and NKCD. The short motif at 32–40 is the Effector region element; it reads YDPTIEDSY. The segment at 168–188 is disordered; that stretch reads EKMSKDGKKKKKKTKTKCIIM. A Cysteine methyl ester modification is found at cysteine 185. Cysteine 185 is lipidated: S-farnesyl cysteine. Residues 186–188 constitute a propeptide, removed in mature form; the sequence is IIM.

It belongs to the small GTPase superfamily. Ras family.

It is found in the cell membrane. The protein localises to the cytoplasm. It catalyses the reaction GTP + H2O = GDP + phosphate + H(+). With respect to regulation, alternates between an inactive form bound to GDP and an active form bound to GTP. Activated by a guanine nucleotide-exchange factor (GEF) and inactivated by a GTPase-activating protein (GAP). Its function is as follows. Ras proteins bind GDP/GTP and possess intrinsic GTPase activity. Plays an important role in the regulation of cell proliferation. May play a role in promoting oncogenic events by inducing transcriptional silencing of tumor suppressor genes (TSGs). The polypeptide is GTPase KRas (KRAS) (Meleagris gallopavo (Wild turkey)).